Reading from the N-terminus, the 69-residue chain is Large ribosomal subunit protein uL29 (69 aa).

Belongs to the universal ribosomal protein uL29 family.

This chain is Large ribosomal subunit protein uL29, found in Natronomonas pharaonis (strain ATCC 35678 / DSM 2160 / CIP 103997 / JCM 8858 / NBRC 14720 / NCIMB 2260 / Gabara) (Halobacterium pharaonis).